A 564-amino-acid polypeptide reads, in one-letter code: Keratin, type II cytoskeletal 6B (564 aa).

Low complexity predominate over residues 1–11; sequence MASTSTTIRSH. The interval 1–23 is disordered; the sequence is MASTSTTIRSHSSSRRGFSANSA. N-acetylalanine is present on Ala-2. Residues 2–162 form a head region; sequence ASTSTTIRSH…DPAIQRVRAE (161 aa). Residues 163-198 are coil 1A; that stretch reads EREQIKTLNNKFASFIDKVRFLEQQNKVLDTKWTLL. In terms of domain architecture, IF rod spans 163-476; the sequence is EREQIKTLNN…KLLEGEECRL (314 aa). The segment at 199 to 217 is linker 1; the sequence is QEQGTKTVRQNLEPLFEQY. The interval 218–309 is coil 1B; sequence INNLRRQLDN…ALYDAELSQM (92 aa). Residues 310 to 333 form a linker 12 region; it reads QTHISDTSVVLSMDNNRNLDLDSI. The interval 334–472 is coil 2; it reads IAEVKAQYEE…ATYRKLLEGE (139 aa). Residues 473–564 are tail; that stretch reads ECRLNGEGVG…SSSSRKSYKH (92 aa). Residues 533–564 are disordered; sequence RATGGGLSSVGGGSSTIKYTTTSSSSRKSYKH. Positions 534 to 546 are enriched in gly residues; that stretch reads ATGGGLSSVGGGS. The segment covering 547–564 has biased composition (low complexity); it reads STIKYTTTSSSSRKSYKH.

This sequence belongs to the intermediate filament family. Heterodimer of a type I and a type II keratin. KRT6 isomers associate with KRT16 and/or KRT17. In terms of tissue distribution, constitutively expressed in distinct types of epithelia such as those in oral mucosa, esophagus, papillae of tongue and hair follicle outer root sheath.

This is Keratin, type II cytoskeletal 6B (KRT6B) from Homo sapiens (Human).